A 441-amino-acid polypeptide reads, in one-letter code: MIRGKIDILVVDDDVSHCTILQALLRGWGYNVALAYSGHDALAQVREKVFDLVLCDVRMAEMDGIATLKEIKALNPAIPILIMTAFSSVETAVEALKAGALDYLIKPLDFDRLQETLEKALAHTRETGAELPSASAAQFGMIGSSPAMQHLLNEIAMVAPSDATVLIHGDSGTGKELVARALHACSARSDRPLVTLNCAALNESLLESELFGHEKGAFTGADKRREGRFVEADGGTLFLDEIGDISPLMQVRLLRAIQEREVQRVGSNQTISVDVRLIAATHRDLAEEVSAGRFRQDLYYRLNVVAIEMPSLRQRREDIPLLADHFLRRFAERNRKVVKGFTPQAMDLLIHYDWPGNIRELENAIERAVVLLTGEYISERELPLAIAATPIKTEYSGEIQPLVDVEKEVILAALEKTGGNKTEAARQLGITRKTLLAKLSR.

A Response regulatory domain is found at 7–121; the sequence is DILVVDDDVS…RLQETLEKAL (115 aa). Residue aspartate 56 is modified to 4-aspartylphosphate. The 230-residue stretch at 141 to 370 folds into the Sigma-54 factor interaction domain; it reads MIGSSPAMQH…LENAIERAVV (230 aa). The ATP site is built by glycine 172, threonine 173, arginine 329, and arginine 359. The segment at residues 421-440 is a DNA-binding region (H-T-H motif); that stretch reads KTEAARQLGITRKTLLAKLS.

As to quaternary structure, forms homohexamers in the crystal structure. However, the dimerization interface between DNA-binding domains observed in the crystal structure suggests that dodecamers, rather than hexamers, might be the functionally important oligomer. Phosphorylated by ZraS.

The protein localises to the cytoplasm. With respect to regulation, activity of the ZraS/ZraR two-component system is repressed by the zinc-bound form of ZraP, which probably interacts with the periplasmic region of ZraS. Part of the Zra signaling pathway, an envelope stress response (ESR) system composed of the periplasmic accessory protein ZraP, the histidine kinase ZraS and the transcriptional regulator ZraR. The ZraPSR system contributes to antibiotic resistance and is important for membrane integrity in the presence of membrane-targeting biocides. ZraR is a member of the two-component regulatory system ZraS/ZraR. When activated by ZraS, acts in conjunction with sigma-54 to regulate the expression of zraP in the presence of high Zn(2+) or Pb(2+) concentrations. Also positively autoregulates the expression of the zraSR operon. This is Transcriptional regulatory protein ZraR from Salmonella typhimurium (strain LT2 / SGSC1412 / ATCC 700720).